A 471-amino-acid chain; its full sequence is MPAPTNTLLIEGTFTELADEFAQYIDALRKNEGSSLQSEISSLLEPLRQQEQSEEEPDRKQRDEVLKKLVAAAAVLNAAPEKEIISAYNLLVHLVHQASNPDMFLSRICTYLAKPITTSPQFGPTLAISILTTIFNTLTSSDSSRYHVLLAIVAVIRQSGSSYAFEALKPQLTAQLPTWLAAWELDEEEAQKLHLAVADAAQASGDFELAQSHVVQALQTIPANESSSKEARDLAVRALASALKSPAVFDFTSLTAADAIQALRTSDSSLFELLEIFTADTLDAYEDFVAATPLASISGGVLADAGEALQNKLRLLTLASIAASAPSRSLPYATIASALRVPTEDVEKWVIDTIRAGLVEGKLSQLRSEFLVHRATYRVFGEKQWAEVQGRLMVWRRSLENVLGVVRAERERFIRESLQAATEEANQGKSGEKGGKGGDRRRNPQHQQQQQQSQPSQPQQPRETELVAGAE.

The tract at residues 39–61 is disordered; sequence EISSLLEPLRQQEQSEEEPDRKQ. The PCI domain occupies 206–377; it reads DFELAQSHVV…SEFLVHRATY (172 aa). The disordered stretch occupies residues 419-471; it reads QAATEEANQGKSGEKGGKGGDRRRNPQHQQQQQQSQPSQPQQPRETELVAGAE. Positions 430–442 are enriched in basic and acidic residues; it reads SGEKGGKGGDRRR. The segment covering 445-461 has biased composition (low complexity); the sequence is QHQQQQQQSQPSQPQQP.

Belongs to the eIF-3 subunit M family. In terms of assembly, component of the eukaryotic translation initiation factor 3 (eIF-3) complex.

It is found in the cytoplasm. Its function is as follows. Component of the eukaryotic translation initiation factor 3 (eIF-3) complex, which is involved in protein synthesis of a specialized repertoire of mRNAs and, together with other initiation factors, stimulates binding of mRNA and methionyl-tRNAi to the 40S ribosome. The eIF-3 complex specifically targets and initiates translation of a subset of mRNAs involved in cell proliferation. The polypeptide is Eukaryotic translation initiation factor 3 subunit M (Aspergillus clavatus (strain ATCC 1007 / CBS 513.65 / DSM 816 / NCTC 3887 / NRRL 1 / QM 1276 / 107)).